The sequence spans 452 residues: Phosphoglucosamine mutase (452 aa).

Ser-103 (phosphoserine intermediate) is an active-site residue. Mg(2+) is bound by residues Ser-103, Asp-243, Asp-245, and Asp-247. Ser-103 carries the post-translational modification Phosphoserine.

It belongs to the phosphohexose mutase family. Mg(2+) is required as a cofactor. Post-translationally, activated by phosphorylation.

It catalyses the reaction alpha-D-glucosamine 1-phosphate = D-glucosamine 6-phosphate. Functionally, catalyzes the conversion of glucosamine-6-phosphate to glucosamine-1-phosphate. The chain is Phosphoglucosamine mutase from Exiguobacterium sp. (strain ATCC BAA-1283 / AT1b).